A 382-amino-acid chain; its full sequence is E3 ubiquitin-protein ligase RNF133 (382 aa).

Residues 65–167 (SSILKRVAGV…IKGMEILHLI (103 aa)) form the PA domain. The chain crosses the membrane as a helical span at residues 190 to 210 (YFVSFMIVTTATLAYFTFYHI). The RING-type; atypical zinc-finger motif lies at 256 to 297 (CVICFEAYKPNEIVRILTCKHFFHKNCIDPWILAHGTCPMCK). Positions 328-382 (TLSPVEEETNYELPPARTSSKVTHVQEHPTSSANAGSQPPEAEETSHPSHGQQVL) are disordered. The span at 344–364 (RTSSKVTHVQEHPTSSANAGS) shows a compositional bias: polar residues.

In terms of assembly, interacts with E3 ligase UBE2J1. Auto-ubiquitinated. In terms of tissue distribution, expression is testis-specific.

It is found in the endoplasmic reticulum membrane. The enzyme catalyses S-ubiquitinyl-[E2 ubiquitin-conjugating enzyme]-L-cysteine + [acceptor protein]-L-lysine = [E2 ubiquitin-conjugating enzyme]-L-cysteine + N(6)-ubiquitinyl-[acceptor protein]-L-lysine.. The protein operates within protein modification; protein ubiquitination. Has E3 ubiquitin-protein ligase activity. Plays a role in male fecundity through the interaction with the E2 ubituitin-protein ligase UBE2J1. In Mus musculus (Mouse), this protein is E3 ubiquitin-protein ligase RNF133 (Rnf133).